We begin with the raw amino-acid sequence, 224 residues long: UPF0758 protein PFL_6051 (224 aa).

An MPN domain is found at 102-224 (ALENPLVVRD…PLSMAEYGWI (123 aa)). Zn(2+) contacts are provided by H173, H175, and D186. A JAMM motif motif is present at residues 173–186 (HNHPSGICEPSPAD).

It belongs to the UPF0758 family.

In Pseudomonas fluorescens (strain ATCC BAA-477 / NRRL B-23932 / Pf-5), this protein is UPF0758 protein PFL_6051.